A 352-amino-acid chain; its full sequence is MSLYCGIACRRKFFWCYRLLSTYVTKTRYLFELKEDDDACKKAQQTGAFYLFHSLAPLLQTSAHQYLAPRHSLLELERLLGKFGQDAQRIEDSVLIGCSEQQEAWFALDLGLDSSFSISASLHKPEMETELKGSFIELRKALFQLNARDASLLSTAQALLRWHDAHQFCSRSGQPTKKNVAGSKRVCPSNNIIYYPQMAPVAITLVSDGTRCLLARQSSFPKGMYSALAGFCDIGESVEETIRREVAEEVGLEVESLQYYASQHWPFPSGSLMIACHATVKPGQTEIQVNLRELETAAWFSHDEVATALKRKGPYTQQQNGTFPFWLPPKLAISHQLIKEWVEKQTCSSLPA.

Residues methionine 1–leucine 20 constitute a mitochondrion transit peptide. The region spanning proline 196–phenylalanine 323 is the Nudix hydrolase domain. The Nudix box motif lies at arginine 216–glutamate 240.

It belongs to the Nudix hydrolase family. Mg(2+) is required as a cofactor. The cofactor is Mn(2+). In terms of tissue distribution, highly expressed in metastasis-suppressed chromosome 6 melanoma hybrids.

The protein localises to the mitochondrion. It carries out the reaction NADH + H2O = reduced beta-nicotinamide D-ribonucleotide + AMP + 2 H(+). The enzyme catalyses NAD(+) + H2O = beta-nicotinamide D-ribonucleotide + AMP + 2 H(+). It catalyses the reaction NADPH + H2O = reduced beta-nicotinamide D-ribonucleotide + adenosine 2',5'-bisphosphate + 2 H(+). Functionally, NAD(P)H pyrophosphatase that hydrolyzes NADH into NMNH and AMP, and NADPH into NMNH and 2',5'-ADP. Has a marked preference for the reduced pyridine nucleotides. Does not show activity toward NAD-capped RNAs; the NAD-cap is an atypical cap present at the 5'-end of some RNAs. This chain is NAD(P)H pyrophosphatase NUDT13, mitochondrial, found in Homo sapiens (Human).